Reading from the N-terminus, the 1390-residue chain is ABC transporter G family member 43 (1390 aa).

The disordered stretch occupies residues 1-22 (MTMPQTDGVEFASRNNLENGDG). In terms of domain architecture, ABC transporter 1 spans 137–411 (SKLSRFTFSK…FEDCGFKCPQ (275 aa)). 171 to 178 (GPPGCGKT) serves as a coordination point for ATP. One can recognise an ABC transmembrane type-2 1 domain in the interval 489 to 701 (DMFKACSRRE…AEIGLTSNEF (213 aa)). A run of 6 helical transmembrane segments spans residues 507 to 527 (FVYVFKSGLLIFIGSIAMTVY), 541 to 561 (YLLGSLFFSLIKLLADGLPEL), 594 to 614 (IPISFLESFLWTMLTYYVIGY), 626 to 646 (LILFALHLSCISMFRAIGAVF), 651 to 671 (VATTIGSISIVLLSVFGGFIV), and 737 to 757 (FGALIGFTLFFNTVFALALTF). The 246-residue stretch at 798-1043 (FTFQDVQYFI…VIEYFMSIPG (246 aa)) folds into the ABC transporter 2 domain. 835-842 (GVSGAGKT) is an ATP binding site. One can recognise an ABC transmembrane type-2 2 domain in the interval 1115–1329 (EQFKACLWKQ…VLNGLLTSQY (215 aa)). 7 helical membrane passes run 1134–1154 (YNLTRIIFMCFTCMLCGILFL), 1173–1193 (MFTVVLFSGINNCSTVIFCVA), 1218–1238 (VLVEIPYSLFQSIIYVIIVYP), 1253–1273 (FYSIFCSLLIFNYFGMLLVVV), 1279–1299 (IAFTLRSSFYAIVNLFAGYVM), 1307–1327 (WWIWMYYLSPTSWVLNGLLTS), and 1362–1382 (LVAVVLIAFPILLASLFAFFI).

This sequence belongs to the ABC transporter superfamily. ABCG family. PDR (TC 3.A.1.205) subfamily.

The protein localises to the membrane. May be a general defense protein. In Arabidopsis thaliana (Mouse-ear cress), this protein is ABC transporter G family member 43 (ABCG43).